Reading from the N-terminus, the 546-residue chain is Chaperonin GroEL (546 aa).

ATP is bound by residues 30 to 33 (TLGP), lysine 51, 87 to 91 (DGTTT), glycine 415, 479 to 481 (NAA), and aspartate 495. Residues 527 to 546 (DESAAPAMPGGMGGMGDMGM) form a disordered region. Gly residues predominate over residues 536-546 (GGMGGMGDMGM).

Belongs to the chaperonin (HSP60) family. In terms of assembly, forms a cylinder of 14 subunits composed of two heptameric rings stacked back-to-back. Interacts with the co-chaperonin GroES.

It is found in the cytoplasm. The catalysed reaction is ATP + H2O + a folded polypeptide = ADP + phosphate + an unfolded polypeptide.. Together with its co-chaperonin GroES, plays an essential role in assisting protein folding. The GroEL-GroES system forms a nano-cage that allows encapsulation of the non-native substrate proteins and provides a physical environment optimized to promote and accelerate protein folding. The sequence is that of Chaperonin GroEL from Acidovorax ebreus (strain TPSY) (Diaphorobacter sp. (strain TPSY)).